We begin with the raw amino-acid sequence, 429 residues long: Enolase (429 aa).

Residue glutamine 163 coordinates (2R)-2-phosphoglycerate. The Proton donor role is filled by glutamate 205. Aspartate 242, glutamate 286, and aspartate 313 together coordinate Mg(2+). The (2R)-2-phosphoglycerate site is built by lysine 338, arginine 367, serine 368, and lysine 389. Lysine 338 (proton acceptor) is an active-site residue.

This sequence belongs to the enolase family. It depends on Mg(2+) as a cofactor.

It localises to the cytoplasm. The protein resides in the secreted. The protein localises to the cell surface. The catalysed reaction is (2R)-2-phosphoglycerate = phosphoenolpyruvate + H2O. Its pathway is carbohydrate degradation; glycolysis; pyruvate from D-glyceraldehyde 3-phosphate: step 4/5. In terms of biological role, catalyzes the reversible conversion of 2-phosphoglycerate (2-PG) into phosphoenolpyruvate (PEP). It is essential for the degradation of carbohydrates via glycolysis. The chain is Enolase from Geobacter metallireducens (strain ATCC 53774 / DSM 7210 / GS-15).